The primary structure comprises 1150 residues: RNA polymerase-associated protein CTR9 (1150 aa).

13 TPR repeats span residues 143–176 (VRAWFYLFERDKSTNKYELADQQFNYVVKTNPKN), 177–210 (VLPLIGKAVIAFNKKDYKTAIYYFRKAIRQCRHT), 212–245 (ADLRVGIGHCFAKMGMMDKAKTAFERAMEIEPYN), 247–282 (SAMCGLGIILLNTYDHDSLKHAVSLFGRSYNLQTDH), 320–353 (AEAFYQMGRCRHAQGQFDGAYKYYYQARQANNGE), 355–388 (TLAHYGLGQMYIHRNEIEEAIKCFDTVHKRLPNN), 432–464 (YEACIDLAQLLEATDPKRSLELYENAIDLLVTN), 471–504 (PEMLNNVGALYMSMKQYEKAEHHFKRAKERLEEQ), 594–627 (PIVWTLIGNLHFAKNEWMPAQKKFEFILSKIFNN), 643–677 (FEQLLNPSRKKEDEKKYIDRALQMYQKALKLQPKN), 679–711 (YAANGIGCVLAYKRNWNDARDVFSQVRESTSEF), 712–745 (YDVWLNIAHVCMEREQWMAAVQMYSSAMKKFRKE), and 748–781 (STLQHYLAKAYYRANMLNEAKEALECAMLDQLDN). Coiled-coil stretches lie at residues 848–916 (AEEA…NLRL) and 972–1028 (ERRE…AKQS). A disordered region spans residues 935 to 1150 (KRRGGGGRKR…KKKVIESDSD (216 aa)). The segment covering 975–992 (ERRKKDKAAKKASRKKRE) has biased composition (basic residues). Composition is skewed to basic and acidic residues over residues 993 to 1005 (RRDSGGPDSNRRD), 1013 to 1024 (EERDRKLQEKLS), 1060 to 1084 (DPRPPVDEFDSPTRTDSDSDRETTT), and 1132 to 1150 (RDSDGSDAPKKKVIESDSD).

Component of the PAF1 complex which consists of at least cdc-73, ctr-9, leo-1, pafo-1 and rtfo-1.

Its subcellular location is the nucleus. Functionally, component of the PAF1 complex which is a multifunctional complex involved in transcription initiation via genetic interactions with TATA-binding proteins, elongation and transcription-coupled histone modification. Ctr-9 is required for epidermal microtubule organization during morphogenesis. The polypeptide is RNA polymerase-associated protein CTR9 (Caenorhabditis elegans).